We begin with the raw amino-acid sequence, 252 residues long: Probable 6-phosphogluconolactonase 5 (252 aa).

This sequence belongs to the glucosamine/galactosamine-6-phosphate isomerase family. 6-phosphogluconolactonase subfamily.

Its subcellular location is the cytoplasm. It is found in the cytosol. It carries out the reaction 6-phospho-D-glucono-1,5-lactone + H2O = 6-phospho-D-gluconate + H(+). It participates in carbohydrate degradation; pentose phosphate pathway; D-ribulose 5-phosphate from D-glucose 6-phosphate (oxidative stage): step 2/3. Its function is as follows. Catalyzes the hydrolysis of 6-phosphogluconolactone to 6-phosphogluconate. The polypeptide is Probable 6-phosphogluconolactonase 5 (Arabidopsis thaliana (Mouse-ear cress)).